We begin with the raw amino-acid sequence, 210 residues long: Uracil phosphoribosyltransferase (210 aa).

5-phospho-alpha-D-ribose 1-diphosphate contacts are provided by residues Arg-80, Arg-105, and 132 to 140; that span reads DPMLATGGS. Uracil is bound by residues Ile-195 and 200–202; that span reads GDA. Asp-201 contacts 5-phospho-alpha-D-ribose 1-diphosphate.

The protein belongs to the UPRTase family. It depends on Mg(2+) as a cofactor.

It catalyses the reaction UMP + diphosphate = 5-phospho-alpha-D-ribose 1-diphosphate + uracil. Its pathway is pyrimidine metabolism; UMP biosynthesis via salvage pathway; UMP from uracil: step 1/1. With respect to regulation, allosterically activated by GTP. Catalyzes the conversion of uracil and 5-phospho-alpha-D-ribose 1-diphosphate (PRPP) to UMP and diphosphate. In Thermoanaerobacter pseudethanolicus (strain ATCC 33223 / 39E) (Clostridium thermohydrosulfuricum), this protein is Uracil phosphoribosyltransferase.